Consider the following 245-residue polypeptide: 14-3-3 protein theta (245 aa).

At Met-1 the chain carries N-acetylmethionine. Position 3 is an N6-acetyllysine (Lys-3). Lys-49 is subject to N6-acetyllysine; alternate. Lys-49 is covalently cross-linked (Glycyl lysine isopeptide (Lys-Gly) (interchain with G-Cter in SUMO2); alternate). Lys-68 is modified (N6-acetyllysine). Tyr-82 carries the 3'-nitrotyrosine modification. Phosphoserine is present on Ser-92. Tyr-104 is subject to 3'-nitrotyrosine. At Lys-115 the chain carries N6-acetyllysine. Residue Ser-232 is modified to Phosphoserine; by CK1.

Belongs to the 14-3-3 family. In terms of assembly, homodimer. Interacts with CDKN1B ('Thr-198' phosphorylated form); the interaction translocates CDKN1B to the cytoplasm. Interacts with SSH1. Interacts with GAB2. Interacts with RGS7 (phosphorylated form). Interacts with CDK16. Interacts with the 'Ser-241' phosphorylated form of PDPK1. Interacts with the 'Thr-369' phosphorylated form of DAPK2. Interacts with PI4KB, TBC1D22A and TBC1D22B. Interacts with SLITRK1. Interacts with RIPOR2. Interacts with INAVA; the interaction increases upon PRR (pattern recognition receptor) stimulation and is required for cellular signaling pathway activation and cytokine secretion. Interacts with MARK2, MARK3 and MARK4. Interacts with MEFV.

It localises to the cytoplasm. Adapter protein implicated in the regulation of a large spectrum of both general and specialized signaling pathways. Binds to a large number of partners, usually by recognition of a phosphoserine or phosphothreonine motif. Binding generally results in the modulation of the activity of the binding partner. Negatively regulates the kinase activity of PDPK1. This is 14-3-3 protein theta (Ywhaq) from Mus musculus (Mouse).